A 440-amino-acid chain; its full sequence is Platelet-activating factor acetylhydrolase (440 aa).

Positions 1–21 are cleaved as a signal peptide; the sequence is MVPLKLQALFCLLCCLPWVHP. 3 N-linked (GlcNAc...) asparagine glycosylation sites follow: asparagine 59, asparagine 75, and asparagine 199. Serine 272 functions as the Nucleophile in the catalytic mechanism. Residues aspartate 295 and histidine 350 each act as charge relay system in the active site.

It belongs to the AB hydrolase superfamily. Lipase family. Post-translationally, N-glycosylated. In terms of tissue distribution, plasma.

It is found in the secreted. Its subcellular location is the extracellular space. The catalysed reaction is a 1-O-alkyl-2-acetyl-sn-glycero-3-phosphocholine + H2O = a 1-O-alkyl-sn-glycero-3-phosphocholine + acetate + H(+). It catalyses the reaction 1-O-decyl-2-acetyl-sn-glycero-3-phosphocholine + H2O = 1-O-decyl-sn-glycero-3-phosphocholine + acetate + H(+). The enzyme catalyses 1-O-dodecyl-2-acetyl-sn-glycero-3-phosphocholine + H2O = 1-O-dodecyl-sn-glycero-3-phosphocholine + acetate + H(+). It carries out the reaction 1-O-tetradecyl-2-acetyl-sn-glycero-3-phosphocholine + H2O = 1-O-tetradecyl-sn-glycero-3-phosphocholine + acetate + H(+). The catalysed reaction is 1-O-hexadecyl-2-acetyl-sn-glycero-3-phosphocholine + H2O = 1-O-hexadecyl-sn-glycero-3-phosphocholine + acetate + H(+). It catalyses the reaction 1-O-octadecyl-2-acetyl-sn-glycero-3-phosphocholine + H2O = 1-O-octadecyl-sn-glycero-3-phosphocholine + acetate + H(+). The enzyme catalyses 1-hexadecanoyl-2-acetyl-sn-glycero-3-phosphocholine + H2O = 1-hexadecanoyl-sn-glycero-3-phosphocholine + acetate + H(+). It carries out the reaction 1-hexadecanoyl-2-propionyl-sn-glycero-3-phosphocholine + H2O = propanoate + 1-hexadecanoyl-sn-glycero-3-phosphocholine + H(+). The catalysed reaction is 1-hexadecanoyl-2-butanoyl-sn-glycero-3-phosphocholine + H2O = butanoate + 1-hexadecanoyl-sn-glycero-3-phosphocholine + H(+). It catalyses the reaction 1-hexadecanoyl-2-pentanoyl-sn-glycero-3-phosphocholine + H2O = pentanoate + 1-hexadecanoyl-sn-glycero-3-phosphocholine + H(+). The enzyme catalyses 1-hexadecanoyl-2-glutaroyl-sn-glycero-3-phosphocholine + H2O = glutarate + 1-hexadecanoyl-sn-glycero-3-phosphocholine + H(+). It carries out the reaction 1-hexadecanoyl-2-(5-oxopentanoyl)-sn-glycero-3-phosphocholine + H2O = 5-oxopentanoate + 1-hexadecanoyl-sn-glycero-3-phosphocholine + H(+). The catalysed reaction is 1-hexadecanoyl-2-(9-oxononanoyl)-sn-glycero-3-phosphocholine + H2O = 9-oxononanoate + 1-hexadecanoyl-sn-glycero-3-phosphocholine + H(+). It catalyses the reaction 1-hexadecanoyl-2-[9-hydroperoxy-(10E-octadecenoyl)]-sn-glycero-3-phosphocholine + H2O = 9-hydroperoxy-10E-octadecenoate + 1-hexadecanoyl-sn-glycero-3-phosphocholine + H(+). The enzyme catalyses 1-hexadecanoyl-2-(10-hydroperoxy-8E-octadecenoyl)-sn-glycero-3-phosphocholine + H2O = 10-hydroperoxy-(8E)-octadecenoate + 1-hexadecanoyl-sn-glycero-3-phosphocholine + H(+). Its function is as follows. Lipoprotein-associated calcium-independent phospholipase A2 involved in phospholipid catabolism during inflammatory and oxidative stress response. At the lipid-aqueous interface, hydrolyzes the ester bond of fatty acyl group attached at sn-2 position of phospholipids (phospholipase A2 activity). Specifically targets phospholipids with a short-chain fatty acyl group at sn-2 position. Can hydrolyze phospholipids with long fatty acyl chains, only if they carry oxidized functional groups. Hydrolyzes and inactivates platelet-activating factor (PAF, 1-O-alkyl-2-acetyl-sn-glycero-3-phosphocholine), a potent pro-inflammatory signaling lipid that acts through PTAFR on various innate immune cells. Hydrolyzes oxidatively truncated phospholipids carrying an aldehyde group at omega position, preventing their accumulation in lipoprotein particles and uncontrolled pro-inflammatory effects. As part of high-density lipoprotein (HDL) particles, can hydrolyze phospholipids having long-chain fatty acyl hydroperoxides at sn-2 position and protect against potential accumulation of these oxylipins in the vascular wall. Catalyzes the release from membrane phospholipids of F2-isoprostanes, lipid biomarkers of cellular oxidative damage. This chain is Platelet-activating factor acetylhydrolase (Pla2g7), found in Mus musculus (Mouse).